We begin with the raw amino-acid sequence, 605 residues long: Elongation factor 4 (605 aa).

The 183-residue stretch at 11-193 (KNIRNFSIIA…TLVDVIPAPT (183 aa)) folds into the tr-type G domain. GTP-binding positions include 23 to 28 (DHGKST) and 140 to 143 (NKID).

The protein belongs to the TRAFAC class translation factor GTPase superfamily. Classic translation factor GTPase family. LepA subfamily.

The protein localises to the cell inner membrane. The catalysed reaction is GTP + H2O = GDP + phosphate + H(+). Its function is as follows. Required for accurate and efficient protein synthesis under certain stress conditions. May act as a fidelity factor of the translation reaction, by catalyzing a one-codon backward translocation of tRNAs on improperly translocated ribosomes. Back-translocation proceeds from a post-translocation (POST) complex to a pre-translocation (PRE) complex, thus giving elongation factor G a second chance to translocate the tRNAs correctly. Binds to ribosomes in a GTP-dependent manner. The polypeptide is Elongation factor 4 (Acinetobacter baumannii (strain AB307-0294)).